The primary structure comprises 135 residues: Transcription antitermination protein NusB (135 aa).

Belongs to the NusB family.

In terms of biological role, involved in transcription antitermination. Required for transcription of ribosomal RNA (rRNA) genes. Binds specifically to the boxA antiterminator sequence of the ribosomal RNA (rrn) operons. The polypeptide is Transcription antitermination protein NusB (Clostridium perfringens (strain ATCC 13124 / DSM 756 / JCM 1290 / NCIMB 6125 / NCTC 8237 / Type A)).